We begin with the raw amino-acid sequence, 101 residues long: Aspartyl/glutamyl-tRNA(Asn/Gln) amidotransferase subunit C (101 aa).

This sequence belongs to the GatC family. Heterotrimer of A, B and C subunits.

The catalysed reaction is L-glutamyl-tRNA(Gln) + L-glutamine + ATP + H2O = L-glutaminyl-tRNA(Gln) + L-glutamate + ADP + phosphate + H(+). The enzyme catalyses L-aspartyl-tRNA(Asn) + L-glutamine + ATP + H2O = L-asparaginyl-tRNA(Asn) + L-glutamate + ADP + phosphate + 2 H(+). Its function is as follows. Allows the formation of correctly charged Asn-tRNA(Asn) or Gln-tRNA(Gln) through the transamidation of misacylated Asp-tRNA(Asn) or Glu-tRNA(Gln) in organisms which lack either or both of asparaginyl-tRNA or glutaminyl-tRNA synthetases. The reaction takes place in the presence of glutamine and ATP through an activated phospho-Asp-tRNA(Asn) or phospho-Glu-tRNA(Gln). This Lactococcus lactis subsp. cremoris (strain MG1363) protein is Aspartyl/glutamyl-tRNA(Asn/Gln) amidotransferase subunit C.